A 330-amino-acid polypeptide reads, in one-letter code: D-alanine--D-alanine ligase (330 aa).

In terms of domain architecture, ATP-grasp spans 121 to 321; the sequence is NHYLKDFGVK…IKDVMTDIIE (201 aa). 149 to 204 contributes to the ATP binding site; the sequence is VTRLGLPIFVKPNDGGSSFGVTKVKEVSAIQPAIAKAFGEGREVILERFIDGTEVT. D275, E288, and N290 together coordinate Mg(2+).

This sequence belongs to the D-alanine--D-alanine ligase family. Mg(2+) serves as cofactor. The cofactor is Mn(2+).

The protein localises to the cytoplasm. It carries out the reaction 2 D-alanine + ATP = D-alanyl-D-alanine + ADP + phosphate + H(+). Its pathway is cell wall biogenesis; peptidoglycan biosynthesis. Cell wall formation. This chain is D-alanine--D-alanine ligase, found in Parabacteroides distasonis (strain ATCC 8503 / DSM 20701 / CIP 104284 / JCM 5825 / NCTC 11152).